The following is a 114-amino-acid chain: MARVKRGNIARKRAKKILQLAKGYRGAHSRLFRIANQQVMKALRYSYVGRKQKKRVFRKLWITRINAASRLNGLSYSRLIHNFKKSNIELNRKMLSQIAVLDIPTFNQLIAISK.

It belongs to the bacterial ribosomal protein bL20 family.

The protein localises to the plastid. The protein resides in the chloroplast. Its function is as follows. Binds directly to 23S ribosomal RNA and is necessary for the in vitro assembly process of the 50S ribosomal subunit. It is not involved in the protein synthesizing functions of that subunit. This Trieres chinensis (Marine centric diatom) protein is Large ribosomal subunit protein bL20c (rpl20).